The following is a 77-amino-acid chain: Chassatide C13 (77 aa).

The first 24 residues, 1 to 24 (MAKFATQLLLFVLIASLVMLEVHA), serve as a signal peptide directing secretion. Residues 25–44 (SNTFQVPDLGKRLLMNRDPN) constitute a propeptide, removed in mature form. A cross-link (cyclopeptide (Gly-Asn)) is located at residues 45–75 (GFPCAESCVYIPCTVTALLGCSCRNRVCYRN). 3 cysteine pairs are disulfide-bonded: cysteine 48-cysteine 65, cysteine 52-cysteine 67, and cysteine 57-cysteine 72. A propeptide spans 76-77 (EL) (removed in mature form).

This is a cyclic peptide. As to expression, expressed in fruit and pedicel but not in root, leaf and stem (at protein level).

Functionally, probably participates in a plant defense mechanism. The chain is Chassatide C13 from Chassalia chartacea (Chassalia curviflora).